The chain runs to 438 residues: Dol-P-Man:Man(5)GlcNAc(2)-PP-Dol alpha-1,3-mannosyltransferase (438 aa).

The residue at position 13 (S13) is a Phosphoserine. Transmembrane regions (helical) follow at residues 41–61, 95–115, 123–143, 149–169, 172–192, 203–223, 231–251, 289–309, 332–352, 356–376, and 407–427; these read YTLL…FWVI, TGPL…FYAT, MAQN…FLIY, VPPF…SIFV, LFND…FLAQ, LAVS…FLLL, ALPK…PFLL, FHLA…LCRW, ALTP…GICF, LHYQ…WAMP, and AALH…PESF.

Belongs to the glycosyltransferase ALG3 family.

The protein localises to the endoplasmic reticulum membrane. It carries out the reaction an alpha-D-Man-(1-&gt;2)-alpha-D-Man-(1-&gt;2)-alpha-D-Man-(1-&gt;3)-[alpha-D-Man-(1-&gt;6)]-beta-D-Man-(1-&gt;4)-beta-D-GlcNAc-(1-&gt;4)-alpha-D-GlcNAc-diphospho-di-trans,poly-cis-dolichol + a di-trans,poly-cis-dolichyl beta-D-mannosyl phosphate = an alpha-D-Man-(1-&gt;2)-alpha-D-Man-(1-&gt;2)-alpha-D-Man-(1-&gt;3)-[alpha-D-Man-(1-&gt;3)-alpha-D-Man-(1-&gt;6)]-beta-D-Man-(1-&gt;4)-beta-D-GlcNAc-(1-&gt;4)-alpha-D-GlcNAc-diphospho-di-trans,poly-cis-dolichol + a di-trans,poly-cis-dolichyl phosphate + H(+). The protein operates within protein modification; protein glycosylation. In terms of biological role, dol-P-Man:Man(5)GlcNAc(2)-PP-Dol alpha-1,3-mannosyltransferase that operates in the biosynthetic pathway of dolichol-linked oligosaccharides, the glycan precursors employed in protein asparagine (N)-glycosylation. The assembly of dolichol-linked oligosaccharides begins on the cytosolic side of the endoplasmic reticulum membrane and finishes in its lumen. The sequential addition of sugars to dolichol pyrophosphate produces dolichol-linked oligosaccharides containing fourteen sugars, including two GlcNAcs, nine mannoses and three glucoses. Once assembled, the oligosaccharide is transferred from the lipid to nascent proteins by oligosaccharyltransferases. In the lumen of the endoplasmic reticulum, adds the first dolichyl beta-D-mannosyl phosphate derived mannose in an alpha-1,3 linkage to Man(5)GlcNAc(2)-PP-dolichol to produce Man(6)GlcNAc(2)-PP-dolichol. Man(6)GlcNAc(2)-PP-dolichol is a substrate for ALG9, the following enzyme in the biosynthetic pathway. The polypeptide is Dol-P-Man:Man(5)GlcNAc(2)-PP-Dol alpha-1,3-mannosyltransferase (Mus musculus (Mouse)).